A 123-amino-acid chain; its full sequence is Small ribosomal subunit protein uS13 (123 aa).

A disordered region spans residues 94–123; it reads AGLPVRGQRTKTNARTRKGPKKTVGVQRKK. A compositionally biased stretch (basic residues) spans 101-123; that stretch reads QRTKTNARTRKGPKKTVGVQRKK.

The protein belongs to the universal ribosomal protein uS13 family. In terms of assembly, part of the 30S ribosomal subunit. Forms a loose heterodimer with protein S19. Forms two bridges to the 50S subunit in the 70S ribosome.

Functionally, located at the top of the head of the 30S subunit, it contacts several helices of the 16S rRNA. In the 70S ribosome it contacts the 23S rRNA (bridge B1a) and protein L5 of the 50S subunit (bridge B1b), connecting the 2 subunits; these bridges are implicated in subunit movement. Contacts the tRNAs in the A and P-sites. The protein is Small ribosomal subunit protein uS13 of Acetivibrio thermocellus (strain ATCC 27405 / DSM 1237 / JCM 9322 / NBRC 103400 / NCIMB 10682 / NRRL B-4536 / VPI 7372) (Clostridium thermocellum).